The sequence spans 473 residues: Putative tyrosine recombinase XerC (473 aa).

The Core-binding (CB) domain occupies M4–M82. Residues R118 to N305 enclose the Tyr recombinase domain. Residues R156, K183, H256, R259, and H283 contribute to the active site. Y292 serves as the catalytic O-(3'-phospho-DNA)-tyrosine intermediate. Residues S341 to S352 are compositionally biased toward polar residues. The interval S341–P365 is disordered.

The protein belongs to the 'phage' integrase family.

The protein resides in the cytoplasm. Functionally, site-specific tyrosine recombinase, which acts by catalyzing the cutting and rejoining of the recombining DNA molecules. This is Putative tyrosine recombinase XerC from Pseudomonas syringae.